The sequence spans 1010 residues: Sodium/potassium-transporting ATPase subunit alpha-3 (1010 aa).

A disordered region spans residues 1–21 (MGDKDDRFPKKKKGGTKDMDA). The Cytoplasmic portion of the chain corresponds to 1–74 (MGDKDDRFPK…NALTPPPTTP (74 aa)). The segment at 69–71 (PPP) is interaction with phosphoinositide-3 kinase. Residues 75–95 (EWVKFCRQLFGGFSILLWTGA) form a helical membrane-spanning segment. At 96 to 118 (ILCFLAYAIQAATEDEPAGDNLY) the chain is on the extracellular side. Residues 119–139 (LGIVLTAVVVITGCFSYFQEA) form a helical membrane-spanning segment. Topologically, residues 140 to 275 (KSSKIMESFK…TGKTPIAVEI (136 aa)) are cytoplasmic. Residues 201-216 (DNSSLTGESEPQSRSP) are compositionally biased toward polar residues. The tract at residues 201–221 (DNSSLTGESEPQSRSPDCTHD) is disordered. A helical membrane pass occupies residues 276–295 (EHFIHIITGVAVFLGVTFFI). Topologically, residues 296-307 (LAIILGYTWLKA) are extracellular. Residues 308–325 (VIFLIGIIVANVPEGLLA) form a helical membrane-spanning segment. Residues 326 to 759 (TVTVCLTLTA…EEGRLIFDNL (434 aa)) are Cytoplasmic-facing. Asp-363 (4-aspartylphosphate intermediate) is an active-site residue. Mg(2+) contacts are provided by Asp-704 and Asp-708. The helical transmembrane segment at 760–779 (KKSIAYTLTSNIPEITPFLF) threads the bilayer. The Extracellular portion of the chain corresponds to 780–789 (FIIVNIPLAL). The helical transmembrane segment at 790–810 (GTITILCIDLGTDMGSAISLA) threads the bilayer. Residues 811–830 (YETAESDIMKRQPRNPCRDK) lie on the Cytoplasmic side of the membrane. The chain crosses the membrane as a helical span at residues 831–853 (LVNERLISIAYGQIGMIQALGGF). The Extracellular segment spans residues 854–905 (FSYFVILAENGFLPSQLVGIRLNWDDRSLNDLEDSYGQQWTYEQRKIVEFTC). The chain crosses the membrane as a helical span at residues 906-925 (HTAFFVSIVVVQWADLIICK). Over 926 to 938 (TRRNSVFQQGMKN) the chain is Cytoplasmic. Ser-930 is modified (phosphoserine; by PKA). The helical transmembrane segment at 939–957 (KILIFGLFEETALAAFLSY) threads the bilayer. At 958-972 (CPGMDVALRMYPLKP) the chain is on the extracellular side. Residues 973 to 993 (TWWFWAFPYSFLIFVYDEARK) traverse the membrane as a helical segment. The Cytoplasmic segment spans residues 994-1010 (LILCRNPGGWVEKETYY).

This sequence belongs to the cation transport ATPase (P-type) (TC 3.A.3) family. Type IIC subfamily. As to quaternary structure, the sodium/potassium-transporting ATPase is composed of a catalytic alpha subunit, an auxiliary non-catalytic beta subunit and an additional regulatory subunit.

It is found in the cell membrane. It catalyses the reaction K(+)(out) + Na(+)(in) + ATP + H2O = K(+)(in) + Na(+)(out) + ADP + phosphate + H(+). Functionally, this is the catalytic component of the active enzyme, which catalyzes the hydrolysis of ATP coupled with the exchange of sodium and potassium ions across the plasma membrane. This action creates the electrochemical gradient of sodium and potassium ions, providing the energy for active transport of various nutrients. The polypeptide is Sodium/potassium-transporting ATPase subunit alpha-3 (atp1a3) (Oreochromis mossambicus (Mozambique tilapia)).